The chain runs to 543 residues: 2,3-bisphosphoglycerate-independent phosphoglycerate mutase (543 aa).

Mn(2+) contacts are provided by Asp24 and Ser74. Ser74 serves as the catalytic Phosphoserine intermediate. Substrate-binding positions include His135, 165-166 (RD), Arg197, Arg203, 268-271 (RPDR), and Lys341. Mn(2+) is bound by residues Asp408, His412, Asp449, His450, and His467.

It belongs to the BPG-independent phosphoglycerate mutase family. Monomer. Requires Mn(2+) as cofactor.

The catalysed reaction is (2R)-2-phosphoglycerate = (2R)-3-phosphoglycerate. The protein operates within carbohydrate degradation; glycolysis; pyruvate from D-glyceraldehyde 3-phosphate: step 3/5. In terms of biological role, catalyzes the interconversion of 2-phosphoglycerate and 3-phosphoglycerate. The polypeptide is 2,3-bisphosphoglycerate-independent phosphoglycerate mutase (Parasynechococcus marenigrum (strain WH8102)).